The following is a 289-amino-acid chain: Serine/threonine-protein phosphatase PGAM5, mitochondrial (289 aa).

Residues 1-6 lie on the Mitochondrial matrix side of the membrane; the sequence is MAFRQA. A helical transmembrane segment spans residues 7–29; it reads LQLAACGLAGGSAAVLFSAVAVG. At 30–289 the chain is on the mitochondrial intermembrane side; sequence KPRAGGDAEP…FMPPDKITRS (260 aa). The segment at 32–59 is disordered; sequence RAGGDAEPRPAEPPAWAGGARPGPGVWD. Residues 45 to 56 show a composition bias toward low complexity; sequence PAWAGGARPGPG. An interaction with KEAP1 region spans residues 77 to 82; that stretch reads NVESGE. S80 and S87 each carry phosphoserine. N6-acetyllysine is present on residues K116, K144, and K191.

This sequence belongs to the phosphoglycerate mutase family. BPG-dependent PGAM subfamily. As to quaternary structure, dimer. Forms a ternary complex with NFE2L2 and KEAP1. Interacts with BCL2L1 and MAP3K5. Upon TNF-induced necrosis, forms in complex with RIPK1, RIPK3 and MLKL; the formation of this complex leads to PGAM5 phosphorylation. Isoform 2, but not isoform 1, interacts with DNM1L; this interaction leads to DNM1L dephosphorylation and activation and eventually to mitochondria fragmentation. Post-translationally, both isoform 1 and isoform 2 are phosphorylated by the RIPK1/RIPK3 complex under necrotic conditions. This phosphorylation increases PGAM5 phosphatase activity. Proteolytically cleaved by PARL in response to loss of mitochondrial membrane potential.

Its subcellular location is the mitochondrion outer membrane. The protein localises to the mitochondrion inner membrane. The catalysed reaction is O-phospho-L-seryl-[protein] + H2O = L-seryl-[protein] + phosphate. It carries out the reaction O-phospho-L-threonyl-[protein] + H2O = L-threonyl-[protein] + phosphate. Functionally, mitochondrial serine/threonine phosphatase that dephosphorylates various substrates and thus plays a role in different biological processes including cellular senescence or mitophagy. Modulates cellular senescence by regulating mitochondrial dynamics. Mechanistically, participates in mitochondrial fission through dephosphorylating DNM1L/DRP1. Additionally, dephosphorylates MFN2 in a stress-sensitive manner and consequently protects it from ubiquitination and degradation to promote mitochondrial network formation. Regulates mitophagy independent of PARKIN by interacting with and dephosphorylating FUNDC1, which interacts with LC3. Regulates anti-oxidative response by forming a tertiary complex with KEAP1 and NRF2. Regulates necroptosis by acting as a RIPK3 target and recruiting the RIPK1-RIPK3-MLKL necrosis 'attack' complex to mitochondria. The chain is Serine/threonine-protein phosphatase PGAM5, mitochondrial (PGAM5) from Homo sapiens (Human).